The following is a 247-amino-acid chain: Proteasome subunit alpha (247 aa).

The protein belongs to the peptidase T1A family. As to quaternary structure, the 20S proteasome core is composed of 14 alpha and 14 beta subunits that assemble into four stacked heptameric rings, resulting in a barrel-shaped structure. The two inner rings, each composed of seven catalytic beta subunits, are sandwiched by two outer rings, each composed of seven alpha subunits. The catalytic chamber with the active sites is on the inside of the barrel. Has a gated structure, the ends of the cylinder being occluded by the N-termini of the alpha-subunits. Is capped at one or both ends by the proteasome regulatory ATPase, PAN.

The protein resides in the cytoplasm. Its activity is regulated as follows. The formation of the proteasomal ATPase PAN-20S proteasome complex, via the docking of the C-termini of PAN into the intersubunit pockets in the alpha-rings, triggers opening of the gate for substrate entry. Interconversion between the open-gate and close-gate conformations leads to a dynamic regulation of the 20S proteasome proteolysis activity. In terms of biological role, component of the proteasome core, a large protease complex with broad specificity involved in protein degradation. This chain is Proteasome subunit alpha, found in Methanosarcina thermophila.